The chain runs to 562 residues: Arf-GAP domain and FG repeat-containing protein 1 (562 aa).

The Arf-GAP domain occupies 11-135; it reads EKHLKMLRDM…WYVPPEQAKV (125 aa). The segment at 29-52 adopts a C4-type zinc-finger fold; that stretch reads CFDCDQRGPTYVNMTVGSFVCTSC. The segment at 145-193 is disordered; sequence GSSASSTSSTPEVKPLKSLLGDSAPTLHLNKGTPSQSPVVGRSQGQQQE. Position 167 is a phosphoserine (serine 167). Residues 176–191 show a composition bias toward polar residues; that stretch reads GTPSQSPVVGRSQGQQ. A Phosphothreonine modification is found at threonine 177. Residues serine 181 and serine 362 each carry the phosphoserine modification. O-linked (GlcNAc) serine glycosylation is present at serine 367.

Interacts with EPS15R and EPS15. Interacts with FCHO1. Post-translationally, O-glycosylated. In terms of tissue distribution, ubiquitously expressed.

It localises to the nucleus. The protein resides in the cytoplasmic vesicle. Functionally, required for vesicle docking or fusion during acrosome biogenesis. May play a role in RNA trafficking or localization. In case of infection by HIV-1, acts as a cofactor for viral Rev and promotes movement of Rev-responsive element-containing RNAs from the nuclear periphery to the cytoplasm. This step is essential for HIV-1 replication. The chain is Arf-GAP domain and FG repeat-containing protein 1 (AGFG1) from Homo sapiens (Human).